The sequence spans 579 residues: ATP-dependent lipid A-core flippase (579 aa).

4 consecutive transmembrane segments (helical) span residues 24-44 (FLAA…LAEM), 61-81 (LMLP…TFLG), 147-167 (LFVI…TLIF), and 253-273 (LLVA…ALMA). Residues 25-306 (LAAVVGYAIY…LTEVNSTIQK (282 aa)) form the ABC transmembrane type-1 domain. Positions 338-573 (VRFEGVRFRY…DGAYAALHQL (236 aa)) constitute an ABC transporter domain. 372–379 (GRSGSGKS) provides a ligand contact to ATP.

Belongs to the ABC transporter superfamily. Lipid exporter (TC 3.A.1.106) family. In terms of assembly, homodimer.

Its subcellular location is the cell inner membrane. It catalyses the reaction ATP + H2O + lipid A-core oligosaccharideSide 1 = ADP + phosphate + lipid A-core oligosaccharideSide 2.. In terms of biological role, involved in lipopolysaccharide (LPS) biosynthesis. Translocates lipid A-core from the inner to the outer leaflet of the inner membrane. Transmembrane domains (TMD) form a pore in the inner membrane and the ATP-binding domain (NBD) is responsible for energy generation. The sequence is that of ATP-dependent lipid A-core flippase from Chromohalobacter salexigens (strain ATCC BAA-138 / DSM 3043 / CIP 106854 / NCIMB 13768 / 1H11).